The following is a 263-amino-acid chain: Aminoglycoside 3'-phosphotransferase (263 aa).

Asp183 (proton acceptor) is an active-site residue.

It belongs to the aminoglycoside phosphotransferase family.

It catalyses the reaction kanamycin A + ATP = kanamycin 3'-phosphate + ADP + H(+). Functionally, resistance to kanamycin and structurally-related aminoglycosides, including amikacin. This is Aminoglycoside 3'-phosphotransferase (rph) from Streptomyces ribosidificus.